Reading from the N-terminus, the 334-residue chain is Phospholipase A1 1 (334 aa).

The N-terminal stretch at 1–23 (MMNLKYLLFFCLVQALHYCYAYG) is a signal peptide. The propeptide occupies 24-33 (DPSLSNELDR). The cysteines at positions 37 and 120 are disulfide-linked. Ser-170 functions as the Nucleophile in the catalytic mechanism. The Charge relay system role is filled by Asp-198. Cystine bridges form between Cys-209–Cys-214 and Cys-252–Cys-261. The active-site Charge relay system is the His-263. Disulfide bonds link Cys-278–Cys-302, Cys-279–Cys-327, and Cys-295–Cys-300.

Belongs to the AB hydrolase superfamily. Lipase family. In terms of processing, not glycosylated. As to expression, expressed by the venom gland.

It localises to the secreted. It carries out the reaction a 1,2-diacyl-sn-glycero-3-phosphocholine + H2O = a 2-acyl-sn-glycero-3-phosphocholine + a fatty acid + H(+). Functionally, catalyzes the hydrolysis of phosphatidylcholine with phospholipase A1 activity (3.6 U/ml). May act as an allergen and induce hemolytic activity. In vivo, a mixture of this protein and Ves a 1.02 is able to paralyze crickets. This is Phospholipase A1 1 from Vespa affinis (Lesser banded hornet).